Reading from the N-terminus, the 221-residue chain is Sperm acrosome membrane-associated protein 3 (221 aa).

Residues 1–69 lie on the Cytoplasmic side of the membrane; sequence MGICMSMYTQ…EARSRAPRRQ (69 aa). Residues 70–90 traverse the membrane as a helical; Signal-anchor for type II membrane protein segment; it reads LCPPGITWLALAYLLSCLLAS. Residues 91–221 lie on the Extracellular side of the membrane; it reads SKAKVFSRCE…LSDWVDGCDF (131 aa). The region spanning 94–221 is the C-type lysozyme domain; sequence KVFSRCELAK…LSDWVDGCDF (128 aa). 4 disulfide bridges follow: Cys-99–Cys-219, Cys-123–Cys-207, Cys-157–Cys-172, and Cys-168–Cys-186.

This sequence belongs to the glycosyl hydrolase 22 family. Interacts with ASTL. The processed form is expressed in sperm (at protein level). Expressed strongly in testis and epididymis and weakly in pancreas.

The protein resides in the cytoplasmic vesicle. Its subcellular location is the secretory vesicle. It localises to the acrosome membrane. It is found in the secreted. In terms of biological role, sperm surface membrane protein that may be involved in sperm-egg plasma membrane adhesion and fusion during fertilization. It could be a potential receptor for the egg oligosaccharide residue N-acetylglucosamine, which is present in the extracellular matrix over the egg plasma membrane. The processed form has no detectable bacteriolytic activity in vitro. The polypeptide is Sperm acrosome membrane-associated protein 3 (Spaca3) (Mus musculus (Mouse)).